The following is a 268-amino-acid chain: MSSMKIAIAGASGRMGRMLIEAVLAAPDATLVGALDRTGSPQLGQDAGAFLGKQTGVALTDDIERVCAEADYLIDFTLPEGTLVHLDAALRHDVKLVIGTTGFSEPQKAQLRAAGEKIALVFSANMSVGVNVTMKLLEFAAKQFAQGYDIEIIEAHHRHKVDAPSGTALMMGETIAAATGRSLDDCAVYGRHGVTGERDPSTIGFSAIRGGDIVGDHTVLFAGIGERIEITHKSASRVSYAQGALRAARFLAGRDAGFFDMQDVLGLR.

Residues 10–15 (GASGRM) and Asp36 each bind NAD(+). Arg37 contributes to the NADP(+) binding site. Residues 99 to 101 (GTT) and 123 to 126 (SANM) each bind NAD(+). The active-site Proton donor/acceptor is His156. His157 serves as a coordination point for (S)-2,3,4,5-tetrahydrodipicolinate. Lys160 (proton donor) is an active-site residue. 166 to 167 (GT) lines the (S)-2,3,4,5-tetrahydrodipicolinate pocket.

It belongs to the DapB family.

It localises to the cytoplasm. It catalyses the reaction (S)-2,3,4,5-tetrahydrodipicolinate + NAD(+) + H2O = (2S,4S)-4-hydroxy-2,3,4,5-tetrahydrodipicolinate + NADH + H(+). It carries out the reaction (S)-2,3,4,5-tetrahydrodipicolinate + NADP(+) + H2O = (2S,4S)-4-hydroxy-2,3,4,5-tetrahydrodipicolinate + NADPH + H(+). It functions in the pathway amino-acid biosynthesis; L-lysine biosynthesis via DAP pathway; (S)-tetrahydrodipicolinate from L-aspartate: step 4/4. Functionally, catalyzes the conversion of 4-hydroxy-tetrahydrodipicolinate (HTPA) to tetrahydrodipicolinate. The polypeptide is 4-hydroxy-tetrahydrodipicolinate reductase (Burkholderia thailandensis (strain ATCC 700388 / DSM 13276 / CCUG 48851 / CIP 106301 / E264)).